The sequence spans 265 residues: Tryptophan synthase alpha chain (265 aa).

Active-site proton acceptor residues include Glu-50 and Asp-61.

The protein belongs to the TrpA family. Tetramer of two alpha and two beta chains.

The enzyme catalyses (1S,2R)-1-C-(indol-3-yl)glycerol 3-phosphate + L-serine = D-glyceraldehyde 3-phosphate + L-tryptophan + H2O. It functions in the pathway amino-acid biosynthesis; L-tryptophan biosynthesis; L-tryptophan from chorismate: step 5/5. In terms of biological role, the alpha subunit is responsible for the aldol cleavage of indoleglycerol phosphate to indole and glyceraldehyde 3-phosphate. The protein is Tryptophan synthase alpha chain of Trichodesmium erythraeum (strain IMS101).